Consider the following 318-residue polypeptide: MMDKRVVAVAAVLWNVQMLFAAGEVIVPEGYASYYAESFNGRPTASGEIFDMNAYTAAHRTLPFGTVVELTNLDNGKKVIVRINDRGPYAANREIDVSKAAAVALDMLNAGVARVSIHKADPNAHASQQRNDRQTSPGVLPQDSFGVPPTAPTSSAPVMYADPHNPPPAPVGRRAGTPGVPGVANTTDVPASEYGAPPVAYAAPGSTPSRVPYGTAVPGSAAPNSHAQPVPSSSSYAAAAPLPYAAGGGKVSGMKSVYTPTHSGETRGVLWRIQLGAFVREENALRLVVKCARRALILHMSEQSTRCAWCCRGYAPRT.

Residues 1–21 (MMDKRVVAVAAVLWNVQMLFA) form the signal peptide. Positions 121-191 (DPNAHASQQR…GVANTTDVPA (71 aa)) are disordered. The segment covering 125–137 (HASQQRNDRQTSP) has biased composition (polar residues).

Belongs to the RlpA family.

In terms of biological role, lytic transglycosylase with a strong preference for naked glycan strands that lack stem peptides. The protein is Probable endolytic peptidoglycan transglycosylase RlpA of Treponema pallidum (strain Nichols).